Consider the following 436-residue polypeptide: Eukaryotic translation initiation factor 5 (436 aa).

Position 27-34 (27-34) interacts with GTP; sequence GKGNGIKT. The disordered stretch occupies residues 177-203; it reads NSDKGSSNDDDDDDWEPEPVEPNGMLS. Residues 184 to 195 show a composition bias toward acidic residues; the sequence is NDDDDDDWEPEP. In terms of domain architecture, W2 spans 216 to 379; that stretch reads EKSEEQRLDM…KEAEEETEEE (164 aa). Residues 396-408 are compositionally biased toward basic and acidic residues; the sequence is LRQQKEKAAREAQ. The segment at 396 to 436 is disordered; the sequence is LRQQKEKAAREAQQKSAKATNGNAAAASGANDEEDLDIDDI. Residues 409–425 show a composition bias toward low complexity; that stretch reads QKSAKATNGNAAAASGA. Residues 426 to 436 show a composition bias toward acidic residues; sequence NDEEDLDIDDI.

Belongs to the eIF-2-beta/eIF-5 family.

In terms of biological role, catalyzes the hydrolysis of GTP bound to the 40S ribosomal initiation complex (40S.mRNA.Met-tRNA[F].eIF-2.GTP) with the subsequent joining of a 60S ribosomal subunit resulting in the release of eIF-2 and the guanine nucleotide. The subsequent joining of a 60S ribosomal subunit results in the formation of a functional 80S initiation complex (80S.mRNA.Met-tRNA[F]). This is Eukaryotic translation initiation factor 5 from Caenorhabditis elegans.